A 119-amino-acid polypeptide reads, in one-letter code: Holo-[acyl-carrier-protein] synthase (119 aa).

Mg(2+)-binding residues include aspartate 8 and glutamate 58.

This sequence belongs to the P-Pant transferase superfamily. AcpS family. The cofactor is Mg(2+).

The protein localises to the cytoplasm. It catalyses the reaction apo-[ACP] + CoA = holo-[ACP] + adenosine 3',5'-bisphosphate + H(+). Its function is as follows. Transfers the 4'-phosphopantetheine moiety from coenzyme A to a Ser of acyl-carrier-protein. This Geobacillus sp. (strain WCH70) protein is Holo-[acyl-carrier-protein] synthase.